Consider the following 234-residue polypeptide: Multicopy suppressor of SEC21 protein 28 (234 aa).

Residues 1 to 47 (MQTPPESTDVKLDTLNEPSAHLIEKNVALPKDIFRSYLSYWIYEIAR) lie on the Cytoplasmic side of the membrane. T3 bears the Phosphothreonine mark. A helical transmembrane segment spans residues 48-68 (YTPVMILSLVIGVLVLLIIFF). Topologically, residues 69–72 (NDNE) are extracellular. The chain crosses the membrane as a helical span at residues 73 to 93 (ACVFNSAIFAFTSLVGLLIIL). Over 94–234 (SDGNPKLVSR…NIDALLKKTE (141 aa)) the chain is Cytoplasmic. Positions 231–234 (KKTE) are COPI binding.

This sequence belongs to the DUP/COS family. Interacts with MST27. Binds to coatomer proteins of COPI and SEC23/SEC24 of COPII coated vesicles.

It is found in the endoplasmic reticulum. Its subcellular location is the golgi apparatus. The protein localises to the cytoplasmic vesicle. The protein resides in the COPI-coated vesicle membrane. It localises to the COPII-coated vesicle membrane. Involved in protein trafficking vesicle formation, probably by stabilizing of coatomer at the Golgi membrane and thus allowing the efficient formation of COPI coated vesicles. In Saccharomyces cerevisiae (strain ATCC 204508 / S288c) (Baker's yeast), this protein is Multicopy suppressor of SEC21 protein 28 (MST28).